Consider the following 90-residue polypeptide: UPF0298 protein SSU05_1549 (90 aa).

It belongs to the UPF0298 family.

The protein resides in the cytoplasm. This is UPF0298 protein SSU05_1549 from Streptococcus suis (strain 05ZYH33).